Here is a 234-residue protein sequence, read N- to C-terminus: UPF0758 protein STH371 (234 aa).

An MPN domain is found at 110-232 (DLCNPRAVFE…YTSFRERGLL (123 aa)). Positions 181, 183, and 194 each coordinate Zn(2+). The short motif at 181–194 (HNHPSGDPTPSRED) is the JAMM motif element.

The protein belongs to the UPF0758 family.

In Symbiobacterium thermophilum (strain DSM 24528 / JCM 14929 / IAM 14863 / T), this protein is UPF0758 protein STH371.